We begin with the raw amino-acid sequence, 850 residues long: Tripartite terminase subunit 1 (850 aa).

A C3H1-type zinc finger spans residues 191-219; that stretch reads CAQCYEELTIIPNQGRSLNKRLQGLLCNH. The interval 438–489 is disordered; it reads GTTLMTASNSSNSSTHSQRNNGGGGRARGGGKKVVGGGVNGQDGDGSENGLR. A compositionally biased stretch (low complexity) spans 439 to 457; it reads TTLMTASNSSNSSTHSQRN. The segment covering 458–481 has biased composition (gly residues); sequence NGGGGRARGGGKKVVGGGVNGQDG. 709-716 contacts ATP; that stretch reads YNETFGKQ. The disordered stretch occupies residues 801–831; the sequence is WLPSPYPSSSTAGVSRRVRATRKRPRRASSL. The segment covering 816–827 has biased composition (basic residues); it reads RRVRATRKRPRR. The Nuclear localization signal motif lies at 822 to 827; it reads RKRPRR.

The protein belongs to the herpesviridae TRM1 protein family. As to quaternary structure, associates with TRM2 and TRM3 to form the tripartite terminase complex. Interacts with portal protein.

Its subcellular location is the host nucleus. In terms of biological role, component of the molecular motor that translocates viral genomic DNA in empty capsid during DNA packaging. Forms a tripartite terminase complex together with TRM2 and TRM3 in the host cytoplasm. Once the complex reaches the host nucleus, it interacts with the capsid portal vertex. This portal forms a ring in which genomic DNA is translocated into the capsid. TRM1 carries an endonuclease activity that plays an important role for the cleavage of concatemeric viral DNA into unit length genomes. In Homo sapiens (Human), this protein is Tripartite terminase subunit 1.